The sequence spans 317 residues: Urease accessory protein 6 (317 aa).

The protein belongs to the UreF family. As to quaternary structure, URE4, URE6 and URE7 may form a complex that acts as a GTP-hydrolysis-dependent molecular chaperone, activating the urease apoprotein URE1.

Functionally, urease accessory protein required for the maturation and activation of urease via the functional incorporation of the urease nickel metallocenter. Plays a role in host brain invasion. The polypeptide is Urease accessory protein 6 (Cryptococcus neoformans var. grubii serotype A (strain H99 / ATCC 208821 / CBS 10515 / FGSC 9487) (Filobasidiella neoformans var. grubii)).